Reading from the N-terminus, the 214-residue chain is Outer-membrane lipoprotein LolB (214 aa).

The N-terminal stretch at Met-1–Gly-25 is a signal peptide. A lipid anchor (N-palmitoyl cysteine) is attached at Cys-26. Residue Cys-26 is the site of S-diacylglycerol cysteine attachment.

The protein belongs to the LolB family. As to quaternary structure, monomer.

It is found in the cell outer membrane. In terms of biological role, plays a critical role in the incorporation of lipoproteins in the outer membrane after they are released by the LolA protein. This Shewanella sp. (strain MR-4) protein is Outer-membrane lipoprotein LolB.